We begin with the raw amino-acid sequence, 412 residues long: Probable tRNA sulfurtransferase (412 aa).

The THUMP domain occupies 58 to 163 (DEVIKQLGYV…SEGTYIYVGK (106 aa)). Residues 181 to 182 (ML), 206 to 207 (HF), arginine 265, glycine 287, and glutamine 296 each bind ATP.

The protein belongs to the ThiI family.

It is found in the cytoplasm. The catalysed reaction is [ThiI sulfur-carrier protein]-S-sulfanyl-L-cysteine + a uridine in tRNA + 2 reduced [2Fe-2S]-[ferredoxin] + ATP + H(+) = [ThiI sulfur-carrier protein]-L-cysteine + a 4-thiouridine in tRNA + 2 oxidized [2Fe-2S]-[ferredoxin] + AMP + diphosphate. It carries out the reaction [ThiS sulfur-carrier protein]-C-terminal Gly-Gly-AMP + S-sulfanyl-L-cysteinyl-[cysteine desulfurase] + AH2 = [ThiS sulfur-carrier protein]-C-terminal-Gly-aminoethanethioate + L-cysteinyl-[cysteine desulfurase] + A + AMP + 2 H(+). It functions in the pathway cofactor biosynthesis; thiamine diphosphate biosynthesis. Its function is as follows. Catalyzes the ATP-dependent transfer of a sulfur to tRNA to produce 4-thiouridine in position 8 of tRNAs, which functions as a near-UV photosensor. Also catalyzes the transfer of sulfur to the sulfur carrier protein ThiS, forming ThiS-thiocarboxylate. This is a step in the synthesis of thiazole, in the thiamine biosynthesis pathway. The sulfur is donated as persulfide by IscS. The sequence is that of Probable tRNA sulfurtransferase from Acholeplasma laidlawii (strain PG-8A).